Consider the following 339-residue polypeptide: NADH-quinone oxidoreductase subunit H (339 aa).

Helical transmembrane passes span 9–29 (IFPLIIIALKVVAITIPLILC), 50–70 (PNVVGPFGLLQPIADAVKLLF), 82–102 (ILFILAPMITFILSLIGWAVI), 115–135 (VGVLYILAISSLSVYGIIIAG), 161–181 (MGLVIITVLLTTGTLNLSEII), 187–207 (MPWWIDLMLLPMGVVFFISVL), 235–255 (MGFALFFLGEYANMILVSAMT), 275–295 (IPGFFWFVFKVGFLLFCFLWI), and 311–331 (GWKVFLPLTLFWVVLVSSVLV).

Belongs to the complex I subunit 1 family. In terms of assembly, NDH-1 is composed of 14 different subunits. Subunits NuoA, H, J, K, L, M, N constitute the membrane sector of the complex.

Its subcellular location is the cell membrane. It catalyses the reaction a quinone + NADH + 5 H(+)(in) = a quinol + NAD(+) + 4 H(+)(out). NDH-1 shuttles electrons from NADH, via FMN and iron-sulfur (Fe-S) centers, to quinones in the respiratory chain. The immediate electron acceptor for the enzyme in this species is believed to be ubiquinone. Couples the redox reaction to proton translocation (for every two electrons transferred, four hydrogen ions are translocated across the cytoplasmic membrane), and thus conserves the redox energy in a proton gradient. This subunit may bind ubiquinone. The protein is NADH-quinone oxidoreductase subunit H of Rickettsia africae (strain ESF-5).